The primary structure comprises 1199 residues: Metabotropic glutamate receptor 1 (1199 aa).

An N-terminal signal peptide occupies residues 1–20 (MVRLLLIFFPMIFLEMSILP). Residues 21 to 592 (RMPDRKVLLA…IRYLEWSDIE (572 aa)) lie on the Extracellular side of the membrane. An intrachain disulfide couples C67 to C109. Residue Y74 participates in L-glutamate binding. A glycan (N-linked (GlcNAc...) asparagine) is linked at N98. Residues S165 and 186–188 (SAT) each bind L-glutamate. The N-linked (GlcNAc...) asparagine glycan is linked to N223. Residue Y236 participates in L-glutamate binding. A disulfide bridge links C289 with C291. D318 contacts L-glutamate. An intrachain disulfide couples C378 to C394. The N-linked (GlcNAc...) asparagine glycan is linked to N397. Residue K409 participates in L-glutamate binding. The cysteines at positions 432 and 439 are disulfide-linked. N515 carries N-linked (GlcNAc...) asparagine glycosylation. A helical transmembrane segment spans residues 593–615 (SIIAIAFSCLGILVTLFVTLIFV). At 616-629 (LYRDTPVVKSSSRE) the chain is on the cytoplasmic side. The chain crosses the membrane as a helical span at residues 630–650 (LCYIILAGIFLGYVCPFTLIA). Residues 651 to 658 (KPTTTSCY) are Extracellular-facing. C657 and C746 are oxidised to a cystine. The helical transmembrane segment at 659 to 680 (LQRLLVGLSSAMCYSALVTKTN) threads the bilayer. The Cytoplasmic segment spans residues 681–703 (RIARILAGSKKKICTRKPRFMSA). The chain crosses the membrane as a helical span at residues 704–727 (WAQVIIASILISVQLTLVVTLIIM). Residues 728 to 750 (EPPMPILSYPSIKEVYLICNTSN) lie on the Extracellular side of the membrane. N-linked (GlcNAc...) asparagine glycosylation occurs at N747. The helical transmembrane segment at 751 to 772 (LGVVAPVGYNGLLIMSCTYYAF) threads the bilayer. The Cytoplasmic portion of the chain corresponds to 773 to 785 (KTRNVPANFNEAK). The chain crosses the membrane as a helical span at residues 786 to 807 (YIAFTMYTTCIIWLAFVPIYFG). At 808-815 (SNYKIITT) the chain is on the extracellular side. The helical transmembrane segment at 816–840 (CFAVSLSVTVALGCMFTPKMYIIIA) threads the bilayer. Over 841-1199 (KPERNVRSAF…RDYKQSSSTL (359 aa)) the chain is Cytoplasmic. S853 is modified (phosphoserine). The residue at position 871 (T871) is a Phosphothreonine. Disordered stretches follow at residues 882-906 (GAGN…APKG), 959-1035 (EEDN…QPKS), and 1055-1082 (HAVL…QHLQ). Polar residues predominate over residues 885-895 (NANSNGKSVSW). Phosphoserine is present on residues S894 and S969. The segment covering 1012–1032 (GLPPPLPQQQQQPPPQPPPQQ) has biased composition (pro residues). S1097 is subject to Phosphoserine. The segment at 1118-1177 (VYEREGNTEEDDLEEEEDLPAASKLTPEDSPALTPPSPFRDSVASGSSVPSSPVSESVLC) is disordered. The span at 1125–1136 (TEEDDLEEEEDL) shows a compositional bias: acidic residues. Phosphoserine is present on S1147. Residue T1151 is modified to Phosphothreonine. At S1154 the chain carries Phosphoserine. A compositionally biased stretch (low complexity) spans 1159–1175 (SVASGSSVPSSPVSESV).

This sequence belongs to the G-protein coupled receptor 3 family. In terms of assembly, homodimer; disulfide-linked. The PPXXF motif binds HOMER1, HOMER2 and HOMER3. Interacts with TAMALIN. Interacts with RYR1, RYR2, ITPR1, SHANK1 and SHANK3. Interacts with SHIA1. As to expression, expressed in the striatum (at protein level). Expressed in type II unipolar brush cells of the cerebellum (at protein level).

The protein resides in the cell membrane. It localises to the postsynaptic cell membrane. Its subcellular location is the cell projection. It is found in the dendrite. Its function is as follows. G-protein coupled receptor for glutamate. Ligand binding causes a conformation change that triggers signaling via guanine nucleotide-binding proteins (G proteins) and modulates the activity of down-stream effectors. Signaling activates a phosphatidylinositol-calcium second messenger system. May participate in the central action of glutamate in the CNS, such as long-term potentiation in the hippocampus and long-term depression in the cerebellum (By. similarity). May function in the light response in the retina. Induces GRID1 and GRID2 cation-channel activation via GNAQ-PLC-PKC pathway in dopaminergic neurons and cerebellar Purkinje cell, respectively. This is Metabotropic glutamate receptor 1 (Grm1) from Mus musculus (Mouse).